Reading from the N-terminus, the 861-residue chain is Seed linoleate 9S-lipoxygenase-3 (861 aa).

In terms of domain architecture, PLAT spans 41-166; that stretch reads QGFDILGSTV…HHKIDRIFFA (126 aa). One can recognise a Lipoxygenase domain in the interval 169–861; that stretch reads TYLPSETPAP…FRGIPNSISI (693 aa). The segment at 215 to 257 is disordered; the sequence is NPDSGENHARPVLGGSETYPYPRRGRTGRKPTRKDPNSESRSD. Over residues 237–246 the composition is skewed to basic residues; sequence RRGRTGRKPT. A compositionally biased stretch (basic and acidic residues) spans 247–257; that stretch reads RKDPNSESRSD. The Fe cation site is built by histidine 522, histidine 527, histidine 713, asparagine 717, and isoleucine 861.

Belongs to the lipoxygenase family. Fe cation is required as a cofactor.

Its subcellular location is the cytoplasm. The catalysed reaction is (9Z,12Z)-octadecadienoate + O2 = (9S)-hydroperoxy-(10E,12Z)-octadecadienoate. It participates in lipid metabolism; oxylipin biosynthesis. In terms of biological role, plant lipoxygenase may be involved in a number of diverse aspects of plant physiology including growth and development, pest resistance, and senescence or responses to wounding. It catalyzes the hydroperoxidation of lipids containing a cis,cis-1,4-pentadiene structure. This is Seed linoleate 9S-lipoxygenase-3 (LOX1.3) from Pisum sativum (Garden pea).